The sequence spans 2197 residues: Protein Ycf2 (2197 aa).

1539–1546 (GSIGTGRS) provides a ligand contact to ATP.

The protein belongs to the Ycf2 family.

The protein resides in the plastid. It is found in the chloroplast stroma. Functionally, probable ATPase of unknown function. Its presence in a non-photosynthetic plant (Epifagus virginiana) and experiments in tobacco indicate that it has an essential function which is probably not related to photosynthesis. The sequence is that of Protein Ycf2 from Ipomoea purpurea (Common morning glory).